The sequence spans 518 residues: Ell-associated factor Eaf (518 aa).

Polar residues-rich tracts occupy residues 119 to 128 (KTRSEMTNKP) and 163 to 182 (ENSTMRITSKTKVSTGSRRN). 2 disordered regions span residues 119 to 216 (KTRS…PAWH) and 241 to 518 (ALHN…DDDD). S192 is modified (phosphoserine). 2 stretches are compositionally biased toward polar residues: residues 253 to 265 (ANISGSSTGSSVG) and 274 to 284 (MGKQRQASSQG). The segment covering 289 to 342 (QQQTQRSSPPMQQQQQQQNYGRGGANNNYAQQLHQQQQQQQQQQLQQQQQQMQQ) has biased composition (low complexity). Polar residues predominate over residues 343-355 (RASFSHSNHSNSM). The span at 368–377 (AAQSMAQAAA) shows a compositional bias: low complexity. Acidic residues predominate over residues 397–412 (ESSDSDSGSDSDDSTE). Composition is skewed to low complexity over residues 418–428 (HQQQQPPGQLS), 463–476 (QQQQQQHQQQQQQQ), and 500–518 (NDLLQNDLQLSSNSSDDDD).

The protein belongs to the EAF family.

The protein resides in the nucleus. In terms of biological role, promotes transcriptional elongation by Su(Tpl)/ELL. Essential for development. This is Ell-associated factor Eaf from Drosophila mojavensis (Fruit fly).